The sequence spans 437 residues: Trigger factor (437 aa).

One can recognise a PPIase FKBP-type domain in the interval D161–P246.

Belongs to the FKBP-type PPIase family. Tig subfamily.

It localises to the cytoplasm. It catalyses the reaction [protein]-peptidylproline (omega=180) = [protein]-peptidylproline (omega=0). Functionally, involved in protein export. Acts as a chaperone by maintaining the newly synthesized protein in an open conformation. Functions as a peptidyl-prolyl cis-trans isomerase. This is Trigger factor from Pseudomonas putida (strain GB-1).